We begin with the raw amino-acid sequence, 174 residues long: Ribosome maturation factor RimM (174 aa).

Residues 96-169 (KDTFFICDLI…KMVVDLPQGL (74 aa)) form the PRC barrel domain.

It belongs to the RimM family. In terms of assembly, binds ribosomal protein uS19.

It localises to the cytoplasm. In terms of biological role, an accessory protein needed during the final step in the assembly of 30S ribosomal subunit, possibly for assembly of the head region. Essential for efficient processing of 16S rRNA. May be needed both before and after RbfA during the maturation of 16S rRNA. It has affinity for free ribosomal 30S subunits but not for 70S ribosomes. The polypeptide is Ribosome maturation factor RimM (Acetivibrio thermocellus (strain ATCC 27405 / DSM 1237 / JCM 9322 / NBRC 103400 / NCIMB 10682 / NRRL B-4536 / VPI 7372) (Clostridium thermocellum)).